A 114-amino-acid polypeptide reads, in one-letter code: Hydrogenase maturation factor HypA (114 aa).

Residue histidine 2 coordinates Ni(2+). Zn(2+)-binding residues include cysteine 73, cysteine 76, cysteine 90, and cysteine 93.

The protein belongs to the HypA/HybF family.

Its function is as follows. Involved in the maturation of [NiFe] hydrogenases. Required for nickel insertion into the metal center of the hydrogenase. This is Hydrogenase maturation factor HypA from Chloroflexus aurantiacus (strain ATCC 29366 / DSM 635 / J-10-fl).